The primary structure comprises 235 residues: Glycerol uptake facilitator protein 2 (235 aa).

6 consecutive transmembrane segments (helical) span residues 4-24 (FLGEFLGTMVLIVFGVGSGAA), 39-59 (FICLAWGLAVTFGVYVAGQFG), 62-82 (GHLNPAVTVGFALFGYLPMAN), 83-103 (VWPYLLGQFLGAFIGAVIVII), 134-154 (VFNFLSETIATFFFIFVLLNL), and 165-185 (MVGLLIVVVGQTLGGTTGFAI). The short motif at 65–67 (NPA) is the NPA 1 element. The NPA 2 signature appears at 186 to 188 (NPA). The helical transmembrane segment at 210-230 (WGYAWVPMFGPLLGGILAAGL) threads the bilayer.

Belongs to the MIP/aquaporin (TC 1.A.8) family.

It is found in the cell membrane. Functionally, transporter that facilitates the transmembrane diffusion of water, dihydroxyacetone, glycerol and H(2)O(2). Is not permeable to urea and D/L-lactic acid. In Lactiplantibacillus plantarum (strain ATCC BAA-793 / NCIMB 8826 / WCFS1) (Lactobacillus plantarum), this protein is Glycerol uptake facilitator protein 2.